The chain runs to 301 residues: tRNA pseudouridine synthase B (301 aa).

Residue D38 is the Nucleophile of the active site.

This sequence belongs to the pseudouridine synthase TruB family. Type 1 subfamily.

The enzyme catalyses uridine(55) in tRNA = pseudouridine(55) in tRNA. Functionally, responsible for synthesis of pseudouridine from uracil-55 in the psi GC loop of transfer RNAs. In Limosilactobacillus reuteri (strain DSM 20016) (Lactobacillus reuteri), this protein is tRNA pseudouridine synthase B.